The sequence spans 195 residues: Thioredoxin reductase-like selenoprotein T (195 aa).

Positions 1-19 (MRLLLLLLVAASAVVRSEA) are cleaved as a signal peptide. The cysteinyl-selenocysteine (Cys-Sec) cross-link spans 46–49 (CVSU). Sec49 is a non-standard amino acid (selenocysteine). Residues 85–103 (IASFLSVFKLVLIGLIIVG) form a helical membrane-spanning segment.

Belongs to the SelWTH family. Selenoprotein T subfamily. Post-translationally, may contain a selenide-sulfide bond between Cys-46 and Sec-49. This bond is speculated to serve as redox-active pair. In terms of tissue distribution, ubiquitous. Highly expressed in the endocrine pancreas. Expressed at low levels in the adult brain.

It is found in the endoplasmic reticulum membrane. The enzyme catalyses [thioredoxin]-dithiol + NADP(+) = [thioredoxin]-disulfide + NADPH + H(+). Selenoprotein with thioredoxin reductase-like oxidoreductase activity. Protects dopaminergic neurons against oxidative stress and cell death. Involved in ADCYAP1/PACAP-induced calcium mobilization and neuroendocrine secretion. Plays a role in fibroblast anchorage and redox regulation. In gastric smooth muscle, modulates the contraction processes through the regulation of calcium release and MYLK activation. In pancreatic islets, involved in the control of glucose homeostasis, contributes to prolonged ADCYAP1/PACAP-induced insulin secretion. The protein is Thioredoxin reductase-like selenoprotein T of Mus musculus (Mouse).